The following is a 249-amino-acid chain: Coproheme decarboxylase (249 aa).

Residues Arg131, Tyr145 to Lys149, His172, and Gln185 each bind Fe-coproporphyrin III. Tyr145 is an active-site residue.

This sequence belongs to the ChdC family. Type 1 subfamily. Fe-coproporphyrin III serves as cofactor.

The catalysed reaction is Fe-coproporphyrin III + 2 H2O2 + 2 H(+) = heme b + 2 CO2 + 4 H2O. It carries out the reaction Fe-coproporphyrin III + H2O2 + H(+) = harderoheme III + CO2 + 2 H2O. The enzyme catalyses harderoheme III + H2O2 + H(+) = heme b + CO2 + 2 H2O. It functions in the pathway porphyrin-containing compound metabolism; protoheme biosynthesis. Involved in coproporphyrin-dependent heme b biosynthesis. Catalyzes the decarboxylation of Fe-coproporphyrin III (coproheme) to heme b (protoheme IX), the last step of the pathway. The reaction occurs in a stepwise manner with a three-propionate intermediate. The sequence is that of Coproheme decarboxylase from Staphylococcus haemolyticus (strain JCSC1435).